The primary structure comprises 385 residues: Serine/threonine-protein kinase SBK1 (385 aa).

Residues 32–297 (YEVIRELGKG…VFAHLGHRWM (266 aa)) enclose the Protein kinase domain. Residues 38-46 (LGKGTYGKV) and Lys61 each bind ATP. Asp153 acts as the Proton acceptor in catalysis. Residues 328 to 338 (TLSPTANTSNA) are compositionally biased toward polar residues. The segment at 328-374 (TLSPTANTSNAIEPGSANHFTSMSTNSSVSSTNSYERSARDSPPTSR) is disordered. Over residues 348–361 (TSMSTNSSVSSTNS) the composition is skewed to low complexity.

Belongs to the protein kinase superfamily. Ser/Thr protein kinase family. Mainly expressed in brain.

It localises to the cytoplasm. It catalyses the reaction L-seryl-[protein] + ATP = O-phospho-L-seryl-[protein] + ADP + H(+). The enzyme catalyses L-threonyl-[protein] + ATP = O-phospho-L-threonyl-[protein] + ADP + H(+). May be involved in the control of neuronal proliferation or migration in the brain of embryos. This is Serine/threonine-protein kinase SBK1 (sbk1) from Danio rerio (Zebrafish).